The following is a 67-amino-acid chain: Beta-mammal toxin CeII9 (67 aa).

The region spanning 1 to 66 (KEGYLVNHST…VWPLPKKTCN (66 aa)) is the LCN-type CS-alpha/beta domain. 4 disulfide bridges follow: C12-C65, C16-C41, C25-C46, and C29-C48.

It belongs to the long (4 C-C) scorpion toxin superfamily. Sodium channel inhibitor family. Beta subfamily. In terms of tissue distribution, expressed by the venom gland.

It localises to the secreted. Its function is as follows. Beta toxins bind at site-4 of sodium channels and shift the voltage of activation toward more negative potentials thereby affecting sodium channel activation and promoting spontaneous and repetitive firing. This toxin is active against mammals and lethal to mice. Selectively modulates Nav1.4/SCN4A, a sodium channel present in both denervated and innervated skeletal muscle. The polypeptide is Beta-mammal toxin CeII9 (Centruroides elegans (Bark scorpion)).